A 115-amino-acid chain; its full sequence is Con-Ins G1c (115 aa).

Positions 1 to 24 (MTTSFYFLLMALGLLLYVCQSSFG) are cleaved as a signal peptide. Positions 25 to 29 (NQHTR) are excised as a propeptide. Residue Pro34 is modified to 4-hydroxyproline; partial. Intrachain disulfides connect Cys38/Cys101, Cys50/Cys114, and Cys100/Cys105. Residue Glu41 is modified to 4-carboxyglutamate. The propeptide at 53–94 (KRNDAGKKRGRASPLWQRRGSLSQLKARAKRNGAFHLPRDGR) is c peptide. Residue Glu98 is modified to 4-carboxyglutamate. A 4-hydroxyproline; partial modification is found at Pro104. The residue at position 109 (Glu109) is a 4-carboxyglutamate; partial.

It belongs to the insulin family. In terms of assembly, heterodimer of A and B chains; disulfide-linked. Is different from Con-Ins G1a (AC A0A0B5AC95) due to absence of amidation at Cys-114. As to expression, expressed by the venom gland.

It localises to the secreted. In terms of biological role, this venom insulin, from a fish-hunting cone snail, facilitates prey capture by rapidly inducing hypoglycemic shock. It is one of the smallest known insulin found in nature and lacks the C-terminal segment of the B chain that, in human insulin, mediates engagement of the insulin receptor (INSR) and assembly of the hormone's hexameric storage form. Despite lacking this segment, it both binds and activates human insulin receptor (long isoform (HIR-B)) with only a 10-fold lower potency. In vivo, intraperitoneal injection of this peptide into zebrafish lowers blood glucose with the same potency than human insulin. In addition, when applied to water, this peptide reduces overall locomotor activity of zebrafish larvae, observed as a significant decrease in the percentage of time spent swimming and movement frequency. The chain is Con-Ins G1c from Conus geographus (Geography cone).